The primary structure comprises 234 residues: uncharacterized protein (234 aa).

LRR repeat units follow at residues 44–63 (LEFL…LPKL), 64–84 (KLRK…EKCP), 85–107 (NLTH…PLKQ), and 111–134 (LKSL…VFKL). A disordered region spans residues 161–234 (EGLDDEEEGE…GEEERGQKRK (74 aa)). Acidic residues predominate over residues 163–226 (LDDEEEGEHE…GEEDEEELGE (64 aa)).

It belongs to the ANP32 family. In terms of tissue distribution, expressed in activated stem cells, such as mobilized CD34+ cells and cord blood CD34+ cells, but not in resting bone marrow CD34+ cells. Expressed in a variety of neoplastic cell lines, mainly in prostatic adenocarcinoma cell lines. Not expressed in normal prostatic tissue.

This is an uncharacterized protein from Homo sapiens (Human).